Consider the following 543-residue polypeptide: Tubby-related protein 1 (543 aa).

Positions 1–290 are disordered; that stretch reads MPLQEETLRE…RASSPPVEVG (290 aa). 2 stretches are compositionally biased toward basic and acidic residues: residues 46 to 56 and 86 to 99; these read PETPDSLESKP and FLRD…DPRE. 2 stretches are compositionally biased toward acidic residues: residues 110 to 132 and 244 to 255; these read GGEE…EEEE and KKEEEEEVEEEV. The span at 267 to 276 shows a compositional bias: basic residues; that stretch reads GRAKGKGKKK.

The protein belongs to the TUB family. In terms of assembly, homodimer. May interact with ABCF1, PSIP1, ZEB1 and HMGB2 (Potential). Interacts with F-actin. Interacts with DNM1. Interacts with TUB. Interacts with TYRO3. As to expression, retina specific. Detected in the outer plexiform layer in photoreceptor cells (at protein level).

The protein localises to the cytoplasm. It localises to the cell membrane. It is found in the secreted. The protein resides in the synapse. Its function is as follows. Required for normal development of photoreceptor synapses. Required for normal photoreceptor function and for long-term survival of photoreceptor cells. Interacts with cytoskeleton proteins and may play a role in protein transport in photoreceptor cells. Binds lipids, especially phosphatidylinositol 3-phosphate, phosphatidylinositol 4-phosphate, phosphatidylinositol 5-phosphate, phosphatidylinositol 3,4-bisphosphate, phosphatidylinositol 4,5-bisphosphate, phosphatidylinositol 3,4,5-bisphosphate, phosphatidylserine and phosphatidic acid (in vitro). Contribute to stimulation of phagocytosis of apoptotic retinal pigment epithelium (RPE) cells and macrophages. The polypeptide is Tubby-related protein 1 (Tulp1) (Mus musculus (Mouse)).